We begin with the raw amino-acid sequence, 330 residues long: 4-hydroxythreonine-4-phosphate dehydrogenase (330 aa).

The substrate site is built by His134 and Thr135. A divalent metal cation-binding residues include His164, His209, and His264. 3 residues coordinate substrate: Lys272, Asn281, and Arg290.

Belongs to the PdxA family. In terms of assembly, homodimer. Zn(2+) serves as cofactor. Requires Mg(2+) as cofactor. Co(2+) is required as a cofactor.

The protein resides in the cytoplasm. The catalysed reaction is 4-(phosphooxy)-L-threonine + NAD(+) = 3-amino-2-oxopropyl phosphate + CO2 + NADH. It participates in cofactor biosynthesis; pyridoxine 5'-phosphate biosynthesis; pyridoxine 5'-phosphate from D-erythrose 4-phosphate: step 4/5. Catalyzes the NAD(P)-dependent oxidation of 4-(phosphooxy)-L-threonine (HTP) into 2-amino-3-oxo-4-(phosphooxy)butyric acid which spontaneously decarboxylates to form 3-amino-2-oxopropyl phosphate (AHAP). The sequence is that of 4-hydroxythreonine-4-phosphate dehydrogenase from Pseudoalteromonas translucida (strain TAC 125).